Reading from the N-terminus, the 611-residue chain is Exonuclease V, mitochondrial (611 aa).

The disordered stretch occupies residues 19 to 42; that stretch reads VTSEHEQVQSISKEESRSLSSNDL. The span at 21 to 35 shows a compositional bias: basic and acidic residues; it reads SEHEQVQSISKEESR. [4Fe-4S] cluster is bound by residues cysteine 147, cysteine 569, cysteine 572, and cysteine 578.

It belongs to the EXO5 family. Monomer. Requires Mg(2+) as cofactor. It depends on [4Fe-4S] cluster as a cofactor.

Its subcellular location is the mitochondrion. Its function is as follows. Single strand DNA specific 5'exonuclease involved in mitochondrial DNA replication and recombination. Releases dinucleotides as main products of catalysis. Has the capacity to slide across 5'double-stranded DNA or 5'RNA sequences and resumes cutting two nucleotides downstream of the double-stranded-to-single-stranded junction or RNA-to-DNA junction, respectively. This is Exonuclease V, mitochondrial (EXO5) from Candida albicans (strain WO-1) (Yeast).